Reading from the N-terminus, the 1230-residue chain is Cullin-associated NEDD8-dissociated protein 1 (1230 aa).

A2 carries the post-translational modification N-acetylalanine. 12 HEAT repeats span residues 2 to 39 (ASAS…KDSI), 44 to 81 (DSER…KVKE), 83 to 119 (QVET…ELPP), 131 to 165 (CKKI…LSRQ), 171 to 208 (NFHP…SCGN), 210 to 247 (VFVD…QAGH), 248 to 282 (RIGE…FESF), 289 to 366 (EVYP…TRHE), 370 to 407 (EFYK…QTRP), 424 to 467 (PLTM…VLPG), 471 to 510 (QHIP…NHSP), and 515 to 552 (PHVQ…VIRP). K55 is subject to N6-acetyllysine. Positions 315-344 (DEDEDENAMDADGGDDDDQGSDDEYSDDDD) are disordered. S335 is modified (phosphoserine). A Phosphoserine modification is found at S558. HEAT repeat units follow at residues 563–602 (PYIK…NLGD), 606–643 (PDLS…LKID), 646–683 (PVLG…NYSD), 688–725 (AMID…VYPS), 729–768 (KISG…TGTN), 770–808 (LGYM…ALTR), 809–845 (ACPK…LGEV), 852–889 (SGQL…GNLP), 890–927 (EYLP…GLKP), 928–960 (YVEN…KLTL), 961–998 (IDPE…DHPQ), 1002–1039 (PLLK…NKPS), 1043–1097 (DLLD…DSCL), 1099–1133 (RLDI…LSTL), and 1140–1189 (QRLD…IPEA). K971 carries the post-translational modification N6-acetyllysine.

This sequence belongs to the CAND family. In terms of assembly, interacts with TBP. Part of a complex that contains CUL1 and RBX1. Interacts with unneddylated cullins: interacts with CUL1, CUL2, CUL3, CUL4A, CUL4B and CUL5. Does not bind neddylated CUL1. Interaction with cullins is abolished in presence of COMMD1, which antagonizes with CAND1 for interacting with cullins. Interacts with ERCC6. Interacts with DCUN1D1, DCUN1D2, DCUN1D3, DCUN1D4 and DCUN1D5; these interactions are bridged by cullins and strongly inhibits the neddylation of cullins. As to expression, detected in heart, brain, spleen, liver, skeletal muscle, kidney and testis.

The protein resides in the cytoplasm. Its subcellular location is the nucleus. Its function is as follows. Key assembly factor of SCF (SKP1-CUL1-F-box protein) E3 ubiquitin ligase complexes that promotes the exchange of the substrate-recognition F-box subunit in SCF complexes, thereby playing a key role in the cellular repertoire of SCF complexes. Acts as a F-box protein exchange factor. The exchange activity of CAND1 is coupled with cycles of neddylation conjugation: in the deneddylated state, cullin-binding CAND1 binds CUL1-RBX1, increasing dissociation of the SCF complex and promoting exchange of the F-box protein. Probably plays a similar role in other cullin-RING E3 ubiquitin ligase complexes. May indirectly enhance transcription from various types of promoters. This Rattus norvegicus (Rat) protein is Cullin-associated NEDD8-dissociated protein 1 (Cand1).